Consider the following 963-residue polypeptide: MAEAPAVPMGGAGLRERKIQASRTQEPSPPPDSLMSKMRTDESSKIESENKTFGRTPDGTVFTVPHTRDMVSQLLSPSEPKNLSDILVLTILALHILLLRSLPASIRIPVFAVIFLSWRAAYNIGIGWLLHMQSNHRTLVLWARKLRLFVDPATGQNPHPLLYRFIKRELETKIPEHYTFESAPIEYNTWLVFRRVVDLILMCDFTSYCLFAVACGSRPIGEGLFVMMLRWLAGTSLVLFNLWVKLDAHRVVKDFAWYWGDFFYLIDQDLTFDGVFEMAPHPMYSVGYAGYYGISLMAASYKVLFISILAHAAQFAFLVLVENPHIEKTYNAPPPRKRVVDHDTALHEDVGSRSNSFNSDTTPPLPVPSTTQPRSTHALVGSMDVHRVTDVSVLLIHLLFFALTIITPSTPAYQFFFVLNAAVWRIWYSAGIGYILDRQSTRKSWTRHFVKFGEGQDEAWRQWKGIYHLSMTTCYASFIAAAWKMYTLPQDWGYGLAILRHVLGASLIALQIWTSMSIYESLGEFGWFFGDFFYDESPKLTYSGIYRFLNNPERVLGLAGVWGAVLITNSRAMIFLALLSHTLSIAFIQLVERPHMQKLYGRSLRRDAGLVKSIKRSLPNSLKQFQGSVDKILDESIEFVEEVIDTARPKLAAGVNTFVKDTTALLHKYPARITITRLEPDLAGYEMKDYSLTVEGTQLAQFDKSTDATNNKSRNSRRSEDLVLEYGAPIKVKWTAPLNHSKKDWIGLYMVTHNSSREITKVSSQGRWIATNEGAFDSLTSEVGLKSSDVIIKYTGNDNDKTREVASGEIIFSGEKLWWNQGVFEFRYHHNGKHNVMAISRPFEIRIAKFDENEIPLDNYAVVRPAIEGALLPIIQNCLDRDPDIAPQNAEEAFGSQVDRDSKYTKRVVFAVQHMFGIEFAPEVVSADGNVRNLAWRICNAKKVLAPYSMSRASGATTPVQED.

The segment at 1 to 59 (MAEAPAVPMGGAGLRERKIQASRTQEPSPPPDSLMSKMRTDESSKIESENKTFGRTPDG) is disordered. The Lumenal portion of the chain corresponds to 1 to 85 (MAEAPAVPMG…SPSEPKNLSD (85 aa)). The span at 38–52 (MRTDESSKIESENKT) shows a compositional bias: basic and acidic residues. The helical transmembrane segment at 86–106 (ILVLTILALHILLLRSLPASI) threads the bilayer. Over 107 to 109 (RIP) the chain is Cytoplasmic. A helical transmembrane segment spans residues 110-130 (VFAVIFLSWRAAYNIGIGWLL). Topologically, residues 131–195 (HMQSNHRTLV…EYNTWLVFRR (65 aa)) are lumenal. The helical transmembrane segment at 196 to 216 (VVDLILMCDFTSYCLFAVACG) threads the bilayer. At 217-223 (SRPIGEG) the chain is on the cytoplasmic side. A helical transmembrane segment spans residues 224 to 244 (LFVMMLRWLAGTSLVLFNLWV). The Lumenal portion of the chain corresponds to 245–277 (KLDAHRVVKDFAWYWGDFFYLIDQDLTFDGVFE). The helical transmembrane segment at 278–298 (MAPHPMYSVGYAGYYGISLMA) threads the bilayer. Topologically, residues 299–300 (AS) are cytoplasmic. The chain crosses the membrane as a helical span at residues 301-321 (YKVLFISILAHAAQFAFLVLV). At 322–387 (ENPHIEKTYN…ALVGSMDVHR (66 aa)) the chain is on the lumenal side. The tract at residues 349-373 (DVGSRSNSFNSDTTPPLPVPSTTQP) is disordered. A compositionally biased stretch (polar residues) spans 352–373 (SRSNSFNSDTTPPLPVPSTTQP). A helical membrane pass occupies residues 388 to 408 (VTDVSVLLIHLLFFALTIITP). The Cytoplasmic segment spans residues 409 to 414 (STPAYQ). Residues 415–435 (FFFVLNAAVWRIWYSAGIGYI) traverse the membrane as a helical segment. Residues 436-464 (LDRQSTRKSWTRHFVKFGEGQDEAWRQWK) lie on the Lumenal side of the membrane. The helical transmembrane segment at 465 to 487 (GIYHLSMTTCYASFIAAAWKMYT) threads the bilayer. Residues 488 to 491 (LPQD) are Cytoplasmic-facing. A helical membrane pass occupies residues 492–512 (WGYGLAILRHVLGASLIALQI). Residues 513–571 (WTSMSIYESLGEFGWFFGDFFYDESPKLTYSGIYRFLNNPERVLGLAGVWGAVLITNSR) are Lumenal-facing. A helical membrane pass occupies residues 572–592 (AMIFLALLSHTLSIAFIQLVE). Topologically, residues 593–963 (RPHMQKLYGR…SGATTPVQED (371 aa)) are cytoplasmic.

Belongs to the class VI-like SAM-binding methyltransferase superfamily. CHO2 family.

The protein localises to the endoplasmic reticulum membrane. It catalyses the reaction a 1,2-diacyl-sn-glycero-3-phosphoethanolamine + S-adenosyl-L-methionine = a 1,2-diacyl-sn-glycero-3-phospho-N-methylethanolamine + S-adenosyl-L-homocysteine + H(+). It functions in the pathway phospholipid metabolism; phosphatidylcholine biosynthesis. Its function is as follows. Catalyzes the first step of the methylation pathway of phosphatidylcholine biosynthesis, the SAM-dependent methylation of phosphatidylethanolamine (PE) to phosphatidylmonomethylethanolamine (PMME). The chain is Phosphatidylethanolamine N-methyltransferase (CHO2) from Coccidioides posadasii (strain C735) (Valley fever fungus).